The chain runs to 1024 residues: DNA-directed RNA polymerase subunit beta (1024 aa).

Belongs to the RNA polymerase beta chain family. As to quaternary structure, in plastids the minimal PEP RNA polymerase catalytic core is composed of four subunits: alpha, beta, beta', and beta''. When a (nuclear-encoded) sigma factor is associated with the core the holoenzyme is formed, which can initiate transcription (Potential).

The protein resides in the plastid. The protein localises to the apicoplast. The catalysed reaction is RNA(n) + a ribonucleoside 5'-triphosphate = RNA(n+1) + diphosphate. Its function is as follows. DNA-dependent RNA polymerase catalyzes the transcription of DNA into RNA using the four ribonucleoside triphosphates as substrates. This Plasmodium falciparum (isolate 3D7) protein is DNA-directed RNA polymerase subunit beta (rpoB).